A 245-amino-acid chain; its full sequence is Small ribosomal subunit protein uS3 (245 aa).

The region spanning 39–107 (IRKAIREKLK…EVRVNLVEIR (69 aa)) is the KH type-2 domain. Residues 216–245 (DKRLETSGQSRARANTNQRGPASGAQAAGA) are disordered. Residues 221-235 (TSGQSRARANTNQRG) show a composition bias toward polar residues.

It belongs to the universal ribosomal protein uS3 family. Part of the 30S ribosomal subunit. Forms a tight complex with proteins S10 and S14.

Functionally, binds the lower part of the 30S subunit head. Binds mRNA in the 70S ribosome, positioning it for translation. The protein is Small ribosomal subunit protein uS3 of Hyphomonas neptunium (strain ATCC 15444).